The following is a 225-amino-acid chain: Ribose-5-phosphate isomerase A (225 aa).

Residues 32–35, 85–88, and 98–101 each bind substrate; these read TGST, DGAD, and KGGG. Glu107 acts as the Proton acceptor in catalysis. Lys125 provides a ligand contact to substrate.

The protein belongs to the ribose 5-phosphate isomerase family. In terms of assembly, homodimer.

It carries out the reaction aldehydo-D-ribose 5-phosphate = D-ribulose 5-phosphate. The protein operates within carbohydrate degradation; pentose phosphate pathway; D-ribose 5-phosphate from D-ribulose 5-phosphate (non-oxidative stage): step 1/1. Catalyzes the reversible conversion of ribose-5-phosphate to ribulose 5-phosphate. The sequence is that of Ribose-5-phosphate isomerase A from Marinobacter nauticus (strain ATCC 700491 / DSM 11845 / VT8) (Marinobacter aquaeolei).